We begin with the raw amino-acid sequence, 297 residues long: Iron-sulfur cluster assembly SufBD family protein ycf24 (297 aa).

The protein belongs to the iron-sulfur cluster assembly SufBD family.

Its subcellular location is the plastid. It localises to the chloroplast. The sequence is that of Iron-sulfur cluster assembly SufBD family protein ycf24 (ycf24) from Antithamnion sp. (Red alga).